The chain runs to 346 residues: Glycosyltransferase 1 domain-containing protein 1 (346 aa).

An N-terminal signal peptide occupies residues 1-16 (MRLLFLAVLRPHTGNA).

This sequence belongs to the glycosyltransferase group 1 family. Glycosyltransferase 4 subfamily.

It localises to the secreted. The sequence is that of Glycosyltransferase 1 domain-containing protein 1 (GLT1D1) from Pongo abelii (Sumatran orangutan).